The chain runs to 134 residues: RxLR effector protein 4 (134 aa).

The signal sequence occupies residues 1–22 (MRSLFYIAVAVAVFARSSAVAA). A disordered region spans residues 43 to 65 (AMASSDSRKRFLRATDPEDGDLQ). The span at 48-58 (DSRKRFLRATD) shows a compositional bias: basic and acidic residues. The short motif at 52 to 71 (RFLRATDPEDGDLQADDEER) is the RxLR-dEER element.

The protein belongs to the RxLR effector family.

Its subcellular location is the secreted. Its function is as follows. Effector that enhances plant susceptibility to P.parasitica in Nicotiana benthamiana and Arabidopsis thaliana. Triggers non-specific cell death in a variety of plants, including tobacco, tomato, potato and A.thaliana. E4-induced cell death is dependent on HSP90, NPK and SGT1, suggesting that PpE4 is recognized by the plant immune system. This chain is RxLR effector protein 4, found in Phytophthora nicotianae (strain INRA-310) (Phytophthora parasitica).